The primary structure comprises 144 residues: Aspartate carbamoyltransferase regulatory chain (144 aa).

Zn(2+) is bound by residues Cys103, Cys108, Cys132, and Cys135.

The protein belongs to the PyrI family. In terms of assembly, contains catalytic and regulatory chains. It depends on Zn(2+) as a cofactor.

Its function is as follows. Involved in allosteric regulation of aspartate carbamoyltransferase. In Clostridium tetani (strain Massachusetts / E88), this protein is Aspartate carbamoyltransferase regulatory chain.